The chain runs to 307 residues: OTU domain-containing protein 2 (307 aa).

Disordered regions lie at residues 23 to 46 (ENKDLQNKITGMKKQATKSKRKEV) and 96 to 130 (SRDEKEQQNVPVQQQQQGQTKKRRNRQKERLAKRD). The span at 103 to 114 (QNVPVQQQQQGQ) shows a compositional bias: low complexity. Residues 167–307 (LKQFDIQPDG…GEHYNSLHDS (141 aa)) form the OTU domain.

The protein is OTU domain-containing protein 2 (OTU2) of Saccharomyces cerevisiae (strain ATCC 204508 / S288c) (Baker's yeast).